The primary structure comprises 215 residues: UPF0502 protein YceH (215 aa).

Lysine 80 carries the N6-acetyllysine modification.

This sequence belongs to the UPF0502 family.

In Shigella flexneri serotype 5b (strain 8401), this protein is UPF0502 protein YceH.